A 492-amino-acid chain; its full sequence is GTPase Der (492 aa).

2 EngA-type G domains span residues 3–167 and 201–381; these read FTLA…DAYA and LQVA…EVWN. Residues 9-16, 56-60, 119-122, 207-214, 259-263, and 324-327 each bind GTP; these read GRPNVGKS, DTAGL, NKAE, GRPNAGKS, DTAGM, and NKWD. The region spanning 382-468 is the KH-like domain; sequence RRVTTAQLNR…RLWMRGQNDA (87 aa). Positions 462-492 are disordered; it reads MRGQNDANPYKGRKKAPPSKLRKHTDGRRKD. Residues 472 to 492 show a composition bias toward basic residues; sequence KGRKKAPPSKLRKHTDGRRKD.

This sequence belongs to the TRAFAC class TrmE-Era-EngA-EngB-Septin-like GTPase superfamily. EngA (Der) GTPase family. In terms of assembly, associates with the 50S ribosomal subunit.

GTPase that plays an essential role in the late steps of ribosome biogenesis. This chain is GTPase Der, found in Roseobacter denitrificans (strain ATCC 33942 / OCh 114) (Erythrobacter sp. (strain OCh 114)).